The following is a 492-amino-acid chain: Linolenate hydroperoxide lyase, chloroplastic (492 aa).

The disordered stretch occupies residues 1–33; sequence MLLRTMAATSPRPPPSTSLTSQQPPSPPSQLPL. Residues 1 to 34 constitute a chloroplast transit peptide; it reads MLLRTMAATSPRPPPSTSLTSQQPPSPPSQLPLR. A heme-binding site is contributed by C454.

The protein belongs to the cytochrome P450 family. The cofactor is heme. In terms of tissue distribution, expressed in roots, leaves, flowers and siliques.

The protein localises to the plastid. It localises to the chloroplast. Catalyzes the conversion of (9Z,11E,15Z)-(13S)-hydroperoxyoctadeca-9,11,15-trienoate to (9Z)-12-oxo-dodec-9-enoate and cis-3-hexenal. Possesses low activity toward (9Z,11E)-(13S)-13-hydroperoxyoctadeca-9,11-dienoate. Required for the synthesis of the green leaf volatiles (GLVs) hexanal and trans-2-hexenal. The sequence is that of Linolenate hydroperoxide lyase, chloroplastic from Arabidopsis thaliana (Mouse-ear cress).